Here is a 401-residue protein sequence, read N- to C-terminus: Phosphoglycerate kinase (401 aa).

Residues 20–22, R35, 58–61, R117, and R154 each bind substrate; these read DFN and HLGR. ATP contacts are provided by residues K204, G298, E329, and 358 to 361; that span reads GGDS.

The protein belongs to the phosphoglycerate kinase family. Monomer.

Its subcellular location is the cytoplasm. The catalysed reaction is (2R)-3-phosphoglycerate + ATP = (2R)-3-phospho-glyceroyl phosphate + ADP. Its pathway is carbohydrate degradation; glycolysis; pyruvate from D-glyceraldehyde 3-phosphate: step 2/5. This chain is Phosphoglycerate kinase, found in Bifidobacterium adolescentis (strain ATCC 15703 / DSM 20083 / NCTC 11814 / E194a).